The chain runs to 283 residues: Bifunctional protein FolD (283 aa).

NADP(+) is bound by residues 164–166 and serine 189; that span reads GRS.

This sequence belongs to the tetrahydrofolate dehydrogenase/cyclohydrolase family. Homodimer.

It catalyses the reaction (6R)-5,10-methylene-5,6,7,8-tetrahydrofolate + NADP(+) = (6R)-5,10-methenyltetrahydrofolate + NADPH. It carries out the reaction (6R)-5,10-methenyltetrahydrofolate + H2O = (6R)-10-formyltetrahydrofolate + H(+). Its pathway is one-carbon metabolism; tetrahydrofolate interconversion. In terms of biological role, catalyzes the oxidation of 5,10-methylenetetrahydrofolate to 5,10-methenyltetrahydrofolate and then the hydrolysis of 5,10-methenyltetrahydrofolate to 10-formyltetrahydrofolate. The chain is Bifunctional protein FolD from Lactobacillus acidophilus (strain ATCC 700396 / NCK56 / N2 / NCFM).